Reading from the N-terminus, the 185-residue chain is Elongation factor P (185 aa).

This sequence belongs to the elongation factor P family.

It localises to the cytoplasm. It functions in the pathway protein biosynthesis; polypeptide chain elongation. Involved in peptide bond synthesis. Stimulates efficient translation and peptide-bond synthesis on native or reconstituted 70S ribosomes in vitro. Probably functions indirectly by altering the affinity of the ribosome for aminoacyl-tRNA, thus increasing their reactivity as acceptors for peptidyl transferase. In Symbiobacterium thermophilum (strain DSM 24528 / JCM 14929 / IAM 14863 / T), this protein is Elongation factor P.